The following is a 151-amino-acid chain: Large ribosomal subunit protein uL16 (151 aa).

It belongs to the universal ribosomal protein uL16 family. As to quaternary structure, part of the 50S ribosomal subunit.

Binds 23S rRNA and is also seen to make contacts with the A and possibly P site tRNAs. This is Large ribosomal subunit protein uL16 from Chloroflexus aurantiacus (strain ATCC 29364 / DSM 637 / Y-400-fl).